Here is a 411-residue protein sequence, read N- to C-terminus: Phosphoglycerate kinase (411 aa).

Residues 1 to 24 are disordered; it reads MTGLCPLHQPSPLDHPHSGGTPMQ. Residues 41 to 43, Arg56, 79 to 82, Arg139, and Arg172 contribute to the substrate site; these read DYN and HFGR. Residues Lys222, Gly310, Glu341, and 369-372 each bind ATP; that span reads GGDS.

This sequence belongs to the phosphoglycerate kinase family. As to quaternary structure, monomer.

It is found in the cytoplasm. It catalyses the reaction (2R)-3-phosphoglycerate + ATP = (2R)-3-phospho-glyceroyl phosphate + ADP. Its pathway is carbohydrate degradation; glycolysis; pyruvate from D-glyceraldehyde 3-phosphate: step 2/5. This Deinococcus radiodurans (strain ATCC 13939 / DSM 20539 / JCM 16871 / CCUG 27074 / LMG 4051 / NBRC 15346 / NCIMB 9279 / VKM B-1422 / R1) protein is Phosphoglycerate kinase.